The following is a 420-amino-acid chain: MAP kinase-interacting serine/threonine-protein kinase 1 (420 aa).

A disordered region spans residues Met1–Thr25. The residue at position 27 (Ser27) is a Phosphoserine; by PAK2. Positions Lys37–Val321 constitute a Protein kinase domain. Residues Leu43–Val51 and Lys66 contribute to the ATP site. Asp158 (proton acceptor) is an active-site residue. Ser168 and Ser173 each carry phosphoserine. Phosphothreonine occurs at positions 197, 202, and 332. Residues Leu386–Pro420 are disordered. The segment covering Leu400–Ala409 has biased composition (low complexity). The span at Pro410 to Pro420 shows a compositional bias: pro residues.

This sequence belongs to the protein kinase superfamily. CAMK Ser/Thr protein kinase family. As to quaternary structure, interacts with the C-terminal regions of EIF4G1 and EIF4G2. Also binds to dephosphorylated ERK1 and ERK2, and to the p38 kinases. Requires Mg(2+) as cofactor. Post-translationally, dual phosphorylation of Thr-197 and Thr-202 activates the kinase. Phosphorylation of Thr-332 activates the kinase. MAPK3/ERK1 is one of the kinases which activate MKNK1/MNK1. Phosphorylation by PAK2 leads to a reduced phosphorylation of EIF4G1.

It carries out the reaction L-seryl-[protein] + ATP = O-phospho-L-seryl-[protein] + ADP + H(+). It catalyses the reaction L-threonyl-[protein] + ATP = O-phospho-L-threonyl-[protein] + ADP + H(+). Its activity is regulated as follows. Phosphorylated and activated by the p38 kinases and kinases in the Erk pathway. May play a role in the response to environmental stress and cytokines. Appears to regulate translation by phosphorylating EIF4E, thus increasing the affinity of this protein for the 7-methylguanosine-containing mRNA cap. The polypeptide is MAP kinase-interacting serine/threonine-protein kinase 1 (MKNK1) (Bos taurus (Bovine)).